Consider the following 270-residue polypeptide: Chlorophyll a-b binding protein 7, chloroplastic (270 aa).

The transit peptide at 1–42 (MASACASSTIAAVAFSSPSSRRNGSIVGTTKASFLGGRRLRV) directs the protein to the chloroplast. Trp68 serves as a coordination point for chlorophyll b. Residues Phe88, Glu107, and His110 each contribute to the chlorophyll a site. Chlorophyll b is bound at residue Arg112. The helical transmembrane segment at 113–133 (WAMLGAAGIFIPELLTKIGIL) threads the bilayer. Residue Gln144 coordinates chlorophyll a. A helical transmembrane segment spans residues 146–166 (YFTDTTTLFIVELVLIGWAEG). Chlorophyll b-binding residues include Ile155, Glu165, and Arg168. Chlorophyll a-binding residues include Lys221, Glu222, Asn225, Arg227, Gln239, and His254. A helical transmembrane segment spans residues 228–248 (LAMLAVMGAWFQHIYTGTGPI).

It belongs to the light-harvesting chlorophyll a/b-binding (LHC) protein family. In terms of assembly, the LHC complex consists of chlorophyll a-b binding proteins. The cofactor is Binds at least 14 chlorophylls (8 Chl-a and 6 Chl-b) and carotenoids such as lutein and neoxanthin.. Photoregulated by reversible phosphorylation of its threonine residues.

The protein localises to the plastid. The protein resides in the chloroplast thylakoid membrane. In terms of biological role, the light-harvesting complex (LHC) functions as a light receptor, it captures and delivers excitation energy to photosystems with which it is closely associated. This chain is Chlorophyll a-b binding protein 7, chloroplastic (CAB7), found in Solanum lycopersicum (Tomato).